A 319-amino-acid polypeptide reads, in one-letter code: MSQQNTSGDCLFDGVNELMKTLQFAVHIPTFVLGLLLNLLAIHGFSTFLKNRWPDYAATSIYMINLAVFDLLLVLSLPFKMVLSQVQSPFPSLCTLVECLYFVSMYGSVFTICFISMDRFLAIRYPLLVSHLRSPRKIFGICCTIWVLVWTGSIPIYSFHGKVEKYMCFHNMSDDTWSAKVFFPLEVFGFLLPMGIMGFCCSRSIHILLGRRDHTQDWVQQKACIYSIAASLAVFVVSFLPVHLGFFLQFLVRNSFIVECRAKQSISFFLQLSMCFSNVNCCLDVFCYYFVIKEFRMNIRAHRPSRVQLVLQDTTISRG.

The Extracellular segment spans residues 1–21 (MSQQNTSGDCLFDGVNELMKT). N-linked (GlcNAc...) asparagine glycosylation is present at Asn5. A helical transmembrane segment spans residues 22 to 42 (LQFAVHIPTFVLGLLLNLLAI). Topologically, residues 43-58 (HGFSTFLKNRWPDYAA) are cytoplasmic. A helical membrane pass occupies residues 59 to 79 (TSIYMINLAVFDLLLVLSLPF). The Extracellular segment spans residues 80 to 94 (KMVLSQVQSPFPSLC). A helical transmembrane segment spans residues 95–115 (TLVECLYFVSMYGSVFTICFI). The Cytoplasmic portion of the chain corresponds to 116–137 (SMDRFLAIRYPLLVSHLRSPRK). Residues 138–158 (IFGICCTIWVLVWTGSIPIYS) form a helical membrane-spanning segment. The Extracellular segment spans residues 159 to 180 (FHGKVEKYMCFHNMSDDTWSAK). A glycan (N-linked (GlcNAc...) asparagine) is linked at Asn171. The helical transmembrane segment at 181-201 (VFFPLEVFGFLLPMGIMGFCC) threads the bilayer. Residues 202–231 (SRSIHILLGRRDHTQDWVQQKACIYSIAAS) lie on the Cytoplasmic side of the membrane. A helical transmembrane segment spans residues 232–252 (LAVFVVSFLPVHLGFFLQFLV). The Extracellular portion of the chain corresponds to 253–271 (RNSFIVECRAKQSISFFLQ). The helical transmembrane segment at 272 to 292 (LSMCFSNVNCCLDVFCYYFVI) threads the bilayer. Residues 293-319 (KEFRMNIRAHRPSRVQLVLQDTTISRG) lie on the Cytoplasmic side of the membrane.

This sequence belongs to the G-protein coupled receptor 1 family. As to expression, expressed in the caudate nucleus and putamen, but not detected in the hippocampus, thalamus, pons cerebellum, frontal cortex of the brain or in the liver. Expressed in osteoclasts and osteoblasts. Higly expressed in macrophages and B-cells.

Its subcellular location is the cell membrane. Its function is as follows. G-protein coupled receptor that binds to several ligands including 2-arachidonoyl lysophosphatidylinositol or lysophosphatidylglucoside with high affinity, leading to rapid and transient activation of numerous intracellular signaling pathways. Induces the Ca(2+) release from intracellular stores via ERK, the heterotrimeric G protein GNA13 and RHOA leading to morphological changes including cell rounding and stress fiber formation. In macrophages, acts downstream of lysophosphatidylglucoside to inhibit the translocation of the phospholipid-transporting ABCA1 to plasma membrane and subsequent cholesterol efflux leading to lipid accumulation and foam cell formation. The sequence is that of G-protein coupled receptor 55 (GPR55) from Homo sapiens (Human).